Consider the following 438-residue polypeptide: GTPase Der (438 aa).

EngA-type G domains lie at 4–168 and 177–352; these read PIVA…KNEG and IKIA…DNYC. GTP-binding positions include 10 to 17, 57 to 61, 120 to 123, 183 to 190, 230 to 234, and 295 to 298; these read GRPNVGKS, DTGGI, NKID, GKPNVGKS, DTAGV, and NKWD. The KH-like domain occupies 353 to 437; sequence KQIKTGILND…GIKLEFRERK (85 aa).

It belongs to the TRAFAC class TrmE-Era-EngA-EngB-Septin-like GTPase superfamily. EngA (Der) GTPase family. In terms of assembly, associates with the 50S ribosomal subunit.

Functionally, GTPase that plays an essential role in the late steps of ribosome biogenesis. In Clostridium kluyveri (strain NBRC 12016), this protein is GTPase Der.